The primary structure comprises 394 residues: Ribulose bisphosphate carboxylase large chain (394 aa).

At Lys-5 the chain carries N6,N6,N6-trimethyllysine. 2 residues coordinate substrate: Asn-114 and Thr-164. Residue Lys-166 is the Proton acceptor of the active site. Lys-168 contributes to the substrate binding site. The Mg(2+) site is built by Lys-192, Asp-194, and Glu-195. The residue at position 192 (Lys-192) is an N6-carboxylysine. His-285 acts as the Proton acceptor in catalysis. Residues Arg-286, His-318, and Ser-370 each contribute to the substrate site.

This sequence belongs to the RuBisCO large chain family. Type I subfamily. Heterohexadecamer of 8 large chains and 8 small chains; disulfide-linked. The disulfide link is formed within the large subunit homodimers. It depends on Mg(2+) as a cofactor. In terms of processing, the disulfide bond which can form in the large chain dimeric partners within the hexadecamer appears to be associated with oxidative stress and protein turnover.

Its subcellular location is the plastid. It localises to the chloroplast. It catalyses the reaction 2 (2R)-3-phosphoglycerate + 2 H(+) = D-ribulose 1,5-bisphosphate + CO2 + H2O. The catalysed reaction is D-ribulose 1,5-bisphosphate + O2 = 2-phosphoglycolate + (2R)-3-phosphoglycerate + 2 H(+). Its function is as follows. RuBisCO catalyzes two reactions: the carboxylation of D-ribulose 1,5-bisphosphate, the primary event in carbon dioxide fixation, as well as the oxidative fragmentation of the pentose substrate in the photorespiration process. Both reactions occur simultaneously and in competition at the same active site. The protein is Ribulose bisphosphate carboxylase large chain (rbcL) of Nelumbo lutea (American lotus).